The primary structure comprises 504 residues: D-alanine--D-alanyl carrier protein ligase (504 aa).

152 to 153 provides a ligand contact to ATP; that stretch reads TS. D197 provides a ligand contact to D-alanine. ATP is bound at residue 292–297; the sequence is NTYGPT. Residue V301 coordinates D-alanine. Residues D383, 394–397, and K492 each bind ATP; that span reads YNGR. Position 492 (K492) interacts with D-alanine.

This sequence belongs to the ATP-dependent AMP-binding enzyme family. DltA subfamily.

It localises to the cytoplasm. It carries out the reaction holo-[D-alanyl-carrier protein] + D-alanine + ATP = D-alanyl-[D-alanyl-carrier protein] + AMP + diphosphate. It participates in cell wall biogenesis; lipoteichoic acid biosynthesis. Functionally, catalyzes the first step in the D-alanylation of lipoteichoic acid (LTA), the activation of D-alanine and its transfer onto the D-alanyl carrier protein (Dcp) DltC. In an ATP-dependent two-step reaction, forms a high energy D-alanyl-AMP intermediate, followed by transfer of the D-alanyl residue as a thiol ester to the phosphopantheinyl prosthetic group of the Dcp. D-alanylation of LTA plays an important role in modulating the properties of the cell wall in Gram-positive bacteria, influencing the net charge of the cell wall. This Bacillus mycoides (strain KBAB4) (Bacillus weihenstephanensis) protein is D-alanine--D-alanyl carrier protein ligase.